Reading from the N-terminus, the 288-residue chain is MDKIIKTLSKSGHFRAFVLDSTETVKTAQEKHDTMASSTVALGRTLIANQILAVNEKGDTKITLKILASGAVGAIISVANTKGQVKGYIQNPDLDYKRTATGEVIVGPLVGNGQFLVITDYGTGHPYNSMTPLISGEIGEDFAYFLTDSQQTPSAVGLNVLLDEEDKVKVAGGFLLQVLPGATEVEIARFEKRIQEMPAISSLLASENHIEALLSAIYGDDDFKRLSEEEIGFVCDCSKDRFLDALASLPKADLQEMKEEDKGVDITCQFCQTHYHFDENDLEELING.

2 cysteine pairs are disulfide-bonded: cysteine 235–cysteine 237 and cysteine 268–cysteine 271.

Belongs to the HSP33 family. In terms of processing, under oxidizing conditions two disulfide bonds are formed involving the reactive cysteines. Under reducing conditions zinc is bound to the reactive cysteines and the protein is inactive.

The protein localises to the cytoplasm. Functionally, redox regulated molecular chaperone. Protects both thermally unfolding and oxidatively damaged proteins from irreversible aggregation. Plays an important role in the bacterial defense system toward oxidative stress. The protein is 33 kDa chaperonin of Streptococcus suis (strain 98HAH33).